The chain runs to 445 residues: Tubulin beta-4 chain (445 aa).

Residues 1–4 (MREI) carry the MREI motif motif. Residues Q11, E69, S138, G142, T143, G144, N204, and N226 each coordinate GTP. E69 provides a ligand contact to Mg(2+). Residues 425-445 (YQDATAEEEGEFEEGEEEENA) are disordered. The span at 429–445 (TAEEEGEFEEGEEEENA) shows a compositional bias: acidic residues. The residue at position 438 (E438) is a 5-glutamyl polyglutamate.

Belongs to the tubulin family. In terms of assembly, dimer of alpha and beta chains. A typical microtubule is a hollow water-filled tube with an outer diameter of 25 nm and an inner diameter of 15 nM. Alpha-beta heterodimers associate head-to-tail to form protofilaments running lengthwise along the microtubule wall with the beta-tubulin subunit facing the microtubule plus end conferring a structural polarity. Microtubules usually have 13 protofilaments but different protofilament numbers can be found in some organisms and specialized cells. It depends on Mg(2+) as a cofactor. In terms of processing, some glutamate residues at the C-terminus are polyglycylated, resulting in polyglycine chains on the gamma-carboxyl group. Glycylation is mainly limited to tubulin incorporated into axonemes (cilia and flagella) whereas glutamylation is prevalent in neuronal cells, centrioles, axonemes, and the mitotic spindle. Both modifications can coexist on the same protein on adjacent residues, and lowering polyglycylation levels increases polyglutamylation, and reciprocally. The precise function of polyglycylation is still unclear. Some glutamate residues at the C-terminus are polyglutamylated, resulting in polyglutamate chains on the gamma-carboxyl group. Polyglutamylation plays a key role in microtubule severing by spastin (SPAST). SPAST preferentially recognizes and acts on microtubules decorated with short polyglutamate tails: severing activity by SPAST increases as the number of glutamates per tubulin rises from one to eight, but decreases beyond this glutamylation threshold. In terms of tissue distribution, preferential expression in germ cells.

The protein resides in the cytoplasm. The protein localises to the cytoskeleton. Functionally, tubulin is the major constituent of microtubules, a cylinder consisting of laterally associated linear protofilaments composed of alpha- and beta-tubulin heterodimers. Microtubules grow by the addition of GTP-tubulin dimers to the microtubule end, where a stabilizing cap forms. Below the cap, tubulin dimers are in GDP-bound state, owing to GTPase activity of alpha-tubulin. The sequence is that of Tubulin beta-4 chain (tubb4) from Xenopus laevis (African clawed frog).